A 212-amino-acid chain; its full sequence is Eukaryotic translation initiation factor 4E-1 (212 aa).

A disulfide bridge connects residues cysteine 125 and cysteine 129.

This sequence belongs to the eukaryotic initiation factor 4E family. As to quaternary structure, EIF4F is a multi-subunit complex, the composition of which varies with external and internal environmental conditions. It is composed of at least EIF4A, EIF4E and EIF4G. EIF4E is also known to interact with other partners, including pgl-1. Interacts with ifet-1. In terms of tissue distribution, enriched in the germline from L3 larvae to adults; regions of the gonad undergoing spermatogenesis. Expressed in germ granules (P granules); when associated with pgl-1.

The protein localises to the cytoplasm. Recognizes and binds the 7-methylguanosine-containing mRNA cap during an early step in the initiation of protein synthesis and facilitates ribosome binding by inducing the unwinding of the mRNAs secondary structures. All 5 eIF4E proteins bind monomethyl cap structures. Only ife-1, ife-2 and ife-5 bind trimethyl cap structures which result from trans-splicing. Translation of trimethyl cap structure mRNAs may be regulated by intracellular redox state; disulfide bonds change the width and depth of the cap-binding cavity determining selectivity to mRNA caps. Required for progression through meiotic divisions during spermatogenesis and for the production of viable sperm. It is not required during oogenesis. The chain is Eukaryotic translation initiation factor 4E-1 (ife-1) from Caenorhabditis elegans.